The following is a 556-amino-acid chain: 2-isopropylmalate synthase (556 aa).

One can recognise a Pyruvate carboxyltransferase domain in the interval Pro-33–Asp-307. Asp-42, His-246, His-248, and Asn-282 together coordinate Mg(2+). The interval Ala-439–Ala-556 is regulatory domain.

It belongs to the alpha-IPM synthase/homocitrate synthase family. LeuA type 2 subfamily. In terms of assembly, homodimer. The cofactor is Mg(2+).

The protein resides in the cytoplasm. The catalysed reaction is 3-methyl-2-oxobutanoate + acetyl-CoA + H2O = (2S)-2-isopropylmalate + CoA + H(+). The protein operates within amino-acid biosynthesis; L-leucine biosynthesis; L-leucine from 3-methyl-2-oxobutanoate: step 1/4. Functionally, catalyzes the condensation of the acetyl group of acetyl-CoA with 3-methyl-2-oxobutanoate (2-ketoisovalerate) to form 3-carboxy-3-hydroxy-4-methylpentanoate (2-isopropylmalate). The protein is 2-isopropylmalate synthase of Ectopseudomonas mendocina (strain ymp) (Pseudomonas mendocina).